A 662-amino-acid chain; its full sequence is Primary amine oxidase 2 (662 aa).

The first 22 residues, 1–22 (MSQLLLFTILVFSSVFVIGSLS), serve as a signal peptide directing secretion. N-linked (GlcNAc...) asparagine glycosylation is present at Asn154. Position 321-332 (321-332 (FFDCGEFGCGQY)) interacts with substrate. Asp323 functions as the Proton acceptor in the catalytic mechanism. Residues Cys342 and Cys368 are joined by a disulfide bond. 405 to 410 (VGNYDY) lines the substrate pocket. Residue Tyr408 is the Schiff-base intermediate with substrate; via topaquinone of the active site. Tyr408 is subject to 2',4',5'-topaquinone. His464 and His466 together coordinate Cu cation. Asp473 and Asp475 together coordinate Mn(2+). N-linked (GlcNAc...) asparagine glycosylation is present at Asn568. 2 residues coordinate Mn(2+): Asp602 and Ile603. His613 is a binding site for Cu cation.

Belongs to the copper/topaquinone oxidase family. As to quaternary structure, homodimer. Cu cation is required as a cofactor. The cofactor is Mn(2+). L-topaquinone serves as cofactor. Post-translationally, topaquinone (TPQ) is generated by copper-dependent autoxidation of a specific tyrosyl residue.

The catalysed reaction is a primary methyl amine + O2 + H2O = an aldehyde + H2O2 + NH4(+). This is Primary amine oxidase 2 from Arabidopsis thaliana (Mouse-ear cress).